The chain runs to 301 residues: Methionyl-tRNA formyltransferase (301 aa).

A (6S)-5,6,7,8-tetrahydrofolate-binding site is contributed by Ser109–Pro112.

This sequence belongs to the Fmt family.

It catalyses the reaction L-methionyl-tRNA(fMet) + (6R)-10-formyltetrahydrofolate = N-formyl-L-methionyl-tRNA(fMet) + (6S)-5,6,7,8-tetrahydrofolate + H(+). In terms of biological role, attaches a formyl group to the free amino group of methionyl-tRNA(fMet). The formyl group appears to play a dual role in the initiator identity of N-formylmethionyl-tRNA by promoting its recognition by IF2 and preventing the misappropriation of this tRNA by the elongation apparatus. This is Methionyl-tRNA formyltransferase from Anaplasma marginale (strain St. Maries).